The chain runs to 138 residues: Translation initiation factor 2 subunit beta (138 aa).

This sequence belongs to the eIF-2-beta/eIF-5 family. In terms of assembly, heterotrimer composed of an alpha, a beta and a gamma chain.

In terms of biological role, eIF-2 functions in the early steps of protein synthesis by forming a ternary complex with GTP and initiator tRNA. The polypeptide is Translation initiation factor 2 subunit beta (Methanopyrus kandleri (strain AV19 / DSM 6324 / JCM 9639 / NBRC 100938)).